The following is a 425-amino-acid chain: Glutamyl-tRNA reductase (425 aa).

Substrate is bound by residues 49–52 (TCNR), S109, 114–116 (EGQ), and Q120. C50 serves as the catalytic Nucleophile. 189–194 (GAGKMS) contributes to the NADP(+) binding site.

The protein belongs to the glutamyl-tRNA reductase family. In terms of assembly, homodimer.

The catalysed reaction is (S)-4-amino-5-oxopentanoate + tRNA(Glu) + NADP(+) = L-glutamyl-tRNA(Glu) + NADPH + H(+). Its pathway is porphyrin-containing compound metabolism; protoporphyrin-IX biosynthesis; 5-aminolevulinate from L-glutamyl-tRNA(Glu): step 1/2. It functions in the pathway porphyrin-containing compound metabolism; chlorophyll biosynthesis. Catalyzes the NADPH-dependent reduction of glutamyl-tRNA(Glu) to glutamate 1-semialdehyde (GSA). The protein is Glutamyl-tRNA reductase of Picosynechococcus sp. (strain ATCC 27264 / PCC 7002 / PR-6) (Agmenellum quadruplicatum).